A 318-amino-acid chain; its full sequence is Isoaspartyl peptidase/L-asparaginase (318 aa).

Thr180 serves as the catalytic Nucleophile. Residues 208–211 (RVSD) and 229–232 (TGIG) each bind substrate.

The protein belongs to the Ntn-hydrolase family. In terms of assembly, heterotetramer of two alpha and two beta chains arranged as a dimer of alpha/beta heterodimers. Post-translationally, cleaved into an alpha and beta chain by autocatalysis; this activates the enzyme. The N-terminal residue of the beta subunit is responsible for the nucleophile hydrolase activity.

The catalysed reaction is Cleavage of a beta-linked Asp residue from the N-terminus of a polypeptide.. Degrades proteins damaged by L-isoaspartyl residue formation (also known as beta-Asp residues). Probably performs the final step in the degradation of the reserve polymer cyanophycin (depolymerizes the building block L-beta-Asp-Arg). Also has L-asparaginase activity. The chain is Isoaspartyl peptidase/L-asparaginase from Nostoc sp. (strain PCC 7120 / SAG 25.82 / UTEX 2576).